The sequence spans 408 residues: Probable ethanolamine permease EutH (408 aa).

The next 11 membrane-spanning stretches (helical) occupy residues 1 to 21 (MGIN…AAVD), 61 to 81 (AMVG…PVII), 89 to 109 (ANPS…FFLA), 126 to 146 (ILGS…LGII), 155 to 175 (ALGV…GGLI), 192 to 212 (FALI…VALG), 230 to 250 (FLVA…LLGW), 274 to 294 (IEVI…VLLL), 313 to 333 (NIAA…FGMM), 342 to 362 (VINC…LGFA), and 369 to 389 (MIFP…GVAM).

This sequence belongs to the EutH family.

It is found in the cell inner membrane. The enzyme catalyses ethanolamine(in) = ethanolamine(out). It participates in amine and polyamine degradation; ethanolamine degradation. Functionally, probably involved in the diffusion of protonated ethanolamine (EA) into the cell at low pH. At low pH most EA is protonated, and this permease becomes necessary. Contributes to bacterial survival and replication in acidified macrophage vacuoles, but not to bacterial uptake by macrophages. In terms of biological role, expression of the eut operon allows this bacteria to use ethanolamine (EA) as a carbon, nitrogen and energy source. It relies on cobalamin (vitamin B12) both as a cofactor for the ethanolamine ammonia-lyase (EAL) activity and to induce the operon. EA enhances bacterial survival in macrophages in a concentration-dependent manner, suggesting it is an important nutrient during infection. The sequence is that of Probable ethanolamine permease EutH from Salmonella typhimurium (strain LT2 / SGSC1412 / ATCC 700720).